Here is a 138-residue protein sequence, read N- to C-terminus: Large ribosomal subunit protein uL16 (138 aa).

Residues 1-16 (MLIPRRVKHRKQHHPS) are compositionally biased toward basic residues. Residues 1–25 (MLIPRRVKHRKQHHPSRSGAAKGGT) form a disordered region.

It belongs to the universal ribosomal protein uL16 family. In terms of assembly, part of the 50S ribosomal subunit.

Binds 23S rRNA and is also seen to make contacts with the A and possibly P site tRNAs. The polypeptide is Large ribosomal subunit protein uL16 (Rhodococcus jostii (strain RHA1)).